The chain runs to 384 residues: N-acetyldiaminopimelate deacetylase (384 aa).

Residue Asp-74 is part of the active site. The active-site Proton acceptor is Glu-133.

This sequence belongs to the peptidase M20A family. N-acetyldiaminopimelate deacetylase subfamily.

It carries out the reaction N-acetyl-(2S,6S)-2,6-diaminopimelate + H2O = (2S,6S)-2,6-diaminopimelate + acetate. It functions in the pathway amino-acid biosynthesis; L-lysine biosynthesis via DAP pathway; LL-2,6-diaminopimelate from (S)-tetrahydrodipicolinate (acetylase route): step 3/3. In terms of biological role, catalyzes the conversion of N-acetyl-diaminopimelate to diaminopimelate and acetate. This chain is N-acetyldiaminopimelate deacetylase, found in Leuconostoc mesenteroides subsp. mesenteroides (strain ATCC 8293 / DSM 20343 / BCRC 11652 / CCM 1803 / JCM 6124 / NCDO 523 / NBRC 100496 / NCIMB 8023 / NCTC 12954 / NRRL B-1118 / 37Y).